Here is a 405-residue protein sequence, read N- to C-terminus: Serine--glyoxylate aminotransferase (405 aa).

N6-(pyridoxal phosphate)lysine is present on Lys-196.

The protein belongs to the class-V pyridoxal-phosphate-dependent aminotransferase family. The cofactor is pyridoxal 5'-phosphate.

It catalyses the reaction glyoxylate + L-serine = 3-hydroxypyruvate + glycine. It functions in the pathway one-carbon metabolism; formaldehyde assimilation via serine pathway. This Hyphomicrobium methylovorum protein is Serine--glyoxylate aminotransferase (sgaA).